We begin with the raw amino-acid sequence, 333 residues long: Adenosine deaminase (333 aa).

His-12 and His-14 together coordinate Zn(2+). Substrate is bound by residues His-14, Asp-16, and Gly-170. His-197 provides a ligand contact to Zn(2+). Glu-200 (proton donor) is an active-site residue. Asp-278 lines the Zn(2+) pocket. Asp-279 is a binding site for substrate.

It belongs to the metallo-dependent hydrolases superfamily. Adenosine and AMP deaminases family. Adenosine deaminase subfamily. Zn(2+) is required as a cofactor.

It carries out the reaction adenosine + H2O + H(+) = inosine + NH4(+). The catalysed reaction is 2'-deoxyadenosine + H2O + H(+) = 2'-deoxyinosine + NH4(+). Catalyzes the hydrolytic deamination of adenosine and 2-deoxyadenosine. The chain is Adenosine deaminase from Salmonella agona (strain SL483).